A 215-amino-acid chain; its full sequence is Deoxyribose-phosphate aldolase (215 aa).

The active-site Proton donor/acceptor is D89. K153 serves as the catalytic Schiff-base intermediate with acetaldehyde. The active-site Proton donor/acceptor is the K182.

Belongs to the DeoC/FbaB aldolase family. DeoC type 1 subfamily.

It localises to the cytoplasm. It carries out the reaction 2-deoxy-D-ribose 5-phosphate = D-glyceraldehyde 3-phosphate + acetaldehyde. Its pathway is carbohydrate degradation; 2-deoxy-D-ribose 1-phosphate degradation; D-glyceraldehyde 3-phosphate and acetaldehyde from 2-deoxy-alpha-D-ribose 1-phosphate: step 2/2. Its function is as follows. Catalyzes a reversible aldol reaction between acetaldehyde and D-glyceraldehyde 3-phosphate to generate 2-deoxy-D-ribose 5-phosphate. This is Deoxyribose-phosphate aldolase from Lactiplantibacillus plantarum (strain ATCC BAA-793 / NCIMB 8826 / WCFS1) (Lactobacillus plantarum).